Consider the following 189-residue polypeptide: Apolipoprotein D (189 aa).

A signal peptide spans 1–20; that stretch reads MVMLLLLLSALAGLFGAAEG. Gln-21 bears the Pyrrolidone carboxylic acid mark. Intrachain disulfides connect Cys-28/Cys-134 and Cys-61/Cys-185. 2 N-linked (GlcNAc...) asparagine glycosylation sites follow: Asn-65 and Asn-98.

The protein belongs to the calycin superfamily. Lipocalin family. As to quaternary structure, homodimer.

The protein resides in the secreted. In terms of biological role, APOD occurs in the macromolecular complex with lecithin-cholesterol acyltransferase. It is probably involved in the transport and binding of bilin. Appears to be able to transport a variety of ligands in a number of different contexts. The chain is Apolipoprotein D (APOD) from Macaca fascicularis (Crab-eating macaque).